Reading from the N-terminus, the 316-residue chain is DNA-directed RNA polymerase subunit alpha (316 aa).

An alpha N-terminal domain (alpha-NTD) region spans residues 1 to 232 (MSGNDLFPST…DLFNPLHHCS (232 aa)). The alpha C-terminal domain (alpha-CTD) stretch occupies residues 247 to 316 (KINDILVEEL…LNIYLPKEKY (70 aa)).

Belongs to the RNA polymerase alpha chain family. In plastids the minimal PEP RNA polymerase catalytic core is composed of four subunits: alpha, beta, beta', and beta''. When a (nuclear-encoded) sigma factor is associated with the core the holoenzyme is formed, which can initiate transcription.

It localises to the plastid. The protein localises to the chloroplast. It carries out the reaction RNA(n) + a ribonucleoside 5'-triphosphate = RNA(n+1) + diphosphate. In terms of biological role, DNA-dependent RNA polymerase catalyzes the transcription of DNA into RNA using the four ribonucleoside triphosphates as substrates. This is DNA-directed RNA polymerase subunit alpha from Mesostigma viride (Green alga).